Here is a 315-residue protein sequence, read N- to C-terminus: Glycine--tRNA ligase alpha subunit (315 aa).

This sequence belongs to the class-II aminoacyl-tRNA synthetase family. As to quaternary structure, tetramer of two alpha and two beta subunits.

The protein localises to the cytoplasm. The catalysed reaction is tRNA(Gly) + glycine + ATP = glycyl-tRNA(Gly) + AMP + diphosphate. This is Glycine--tRNA ligase alpha subunit from Pseudomonas putida (strain ATCC 47054 / DSM 6125 / CFBP 8728 / NCIMB 11950 / KT2440).